We begin with the raw amino-acid sequence, 51 residues long: Sperm protamine P1 (51 aa).

2 disulfides stabilise this stretch: cysteine 7-cysteine 15 and cysteine 40-cysteine 48.

It belongs to the protamine P1 family. As to quaternary structure, cross-linked by interchain disulfide bonds around the DNA-helix. As to expression, testis.

The protein resides in the nucleus. It localises to the chromosome. Functionally, protamines substitute for histones in the chromatin of sperm during the haploid phase of spermatogenesis. They compact sperm DNA into a highly condensed, stable and inactive complex. This Capra hircus (Goat) protein is Sperm protamine P1 (PRM1).